Here is a 498-residue protein sequence, read N- to C-terminus: MAVGSMNVEEGTKAFPAKLTGQVFLCCVIAAVGGLMFGYDIGISGGVTSMDTFLLDFFPHVYEKKHRVHENNYCKFDDQLLQLFTSSLYLAGIFASFISSYVSRAFGRKPTIMLASIFFLVGAILNLSAQELGMLIGGRILLGFGIGFGNQTVPLFISEIAPARYRGGLNVMFQFLITIGILAASYVNYLTSTLKNGWRYSLGGAAVPALILLIGSFFIHETPASLIERGKDEKGKQVLRKIRGIEDIELEFNEIKYATEVATKVKSPFKELFTKSENRPPLVCGTLLQFFQQFTGINVVMFYAPVLFQTMGSGDNASLISTVVTNGVNAIATVISLLVVDFAGRRCLLMEGALQMTATQMTIGGILLAHLKLVGPITGHAVPLIVLILICVYVSGFAWSWGPLGWLVPSEIYPLEVRNAGYFCAVAMNMVCTFIIGQFFLSALCRFRSLLFFFFGIMNIIMGLFVVFFLPETKGVPIEEMAEKRWKTHPRWKKYFKD.

Residues 1–22 (MAVGSMNVEEGTKAFPAKLTGQ) lie on the Cytoplasmic side of the membrane. Transmembrane regions (helical) follow at residues 23–43 (VFLC…DIGI), 80–100 (LLQL…FISS), 117–137 (IFFL…MLIG), 140–160 (ILLG…ISEI), 167–187 (GGLN…ASYV), 200–220 (YSLG…FFIH), 288–308 (LQFF…PVLF), 320–340 (ISTV…LLVV), 348–368 (LLME…GILL), 381–401 (AVPL…AWSW), 421–441 (GYFC…QFFL), and 450–470 (LLFF…VFFL). The Cytoplasmic segment spans residues 471–498 (PETKGVPIEEMAEKRWKTHPRWKKYFKD).

Belongs to the major facilitator superfamily. Sugar transporter (TC 2.A.1.1) family. As to expression, pollen specific (at protein level).

The protein resides in the membrane. In terms of biological role, mediates an active uptake of hexoses, probably by sugar/hydrogen symport. Can transport glucose, 3-O-methylglucose, xylose, mannose, fructose and galactose. The polypeptide is Sugar transport protein 2 (STP2) (Arabidopsis thaliana (Mouse-ear cress)).